Consider the following 119-residue polypeptide: Large ribosomal subunit protein uL18 (119 aa).

The protein belongs to the universal ribosomal protein uL18 family. As to quaternary structure, part of the 50S ribosomal subunit; part of the 5S rRNA/L5/L18/L25 subcomplex. Contacts the 5S and 23S rRNAs.

Its function is as follows. This is one of the proteins that bind and probably mediate the attachment of the 5S RNA into the large ribosomal subunit, where it forms part of the central protuberance. The polypeptide is Large ribosomal subunit protein uL18 (Clostridium botulinum (strain Alaska E43 / Type E3)).